A 623-amino-acid polypeptide reads, in one-letter code: Transketolase (623 aa).

The residue at position 1 (M1) is an N-acetylmethionine. 2 positions are modified to N6-acetyllysine: K6 and K11. Residue H37 coordinates substrate. Residues S40 and H77 each coordinate thiamine diphosphate. S104 carries the phosphoserine modification. 123–125 provides a ligand contact to thiamine diphosphate; it reads GSL. The residue at position 144 (K144) is an N6-acetyllysine. D155 serves as a coordination point for Mg(2+). Residues G156 and N185 each coordinate thiamine diphosphate. Residues N185 and L187 each contribute to the Mg(2+) site. 3 positions are modified to N6-acetyllysine: K204, K232, and K241. Thiamine diphosphate-binding residues include K244 and H258. H258 contacts substrate. At K260 the chain carries N6-acetyllysine. Phosphotyrosine is present on Y275. Residue T287 is modified to Phosphothreonine. Phosphoserine is present on S295. R318 contacts substrate. A Glycyl lysine isopeptide (Lys-Gly) (interchain with G-Cter in SUMO2) cross-link involves residue K352. Catalysis depends on E366, which acts as the Proton donor. F392 contacts thiamine diphosphate. Substrate-binding residues include H416 and D424. Q428 lines the thiamine diphosphate pocket. R474 contacts substrate. An N6-acetyllysine mark is found at K538 and K603.

It belongs to the transketolase family. In terms of assembly, homodimer. The cofactor is Mg(2+). It depends on Ca(2+) as a cofactor. Requires Mn(2+) as cofactor. Co(2+) serves as cofactor. Thiamine diphosphate is required as a cofactor.

The catalysed reaction is D-sedoheptulose 7-phosphate + D-glyceraldehyde 3-phosphate = aldehydo-D-ribose 5-phosphate + D-xylulose 5-phosphate. Its function is as follows. Catalyzes the transfer of a two-carbon ketol group from a ketose donor to an aldose acceptor, via a covalent intermediate with the cofactor thiamine pyrophosphate. This is Transketolase (TKT) from Pongo abelii (Sumatran orangutan).